The primary structure comprises 522 residues: MKSFNELVGKLSDPASRQALKSMQRGIEREALRIEKSGHLALDKHPKALGSALTHSRITTDYSESLLEFITPVFADIDELVEDLTLTHAYSVRHLNGQRLWPVSMPCYLGDGADIPIADYGSSNSGQMKSLYRKGLTYRYGAQMQIISGVHFNFSVSDKLWHRLYELSDKSLSLDDFISDSYFGLIRNYRRLVWVLPYLFGASPALCSTFIQDPKTSNFPFEVIGDGTLFMPYATSLRMSDLGYTNQEQDNLNISYNSLTDYLTGMQAAINMPSANFAKIGVKVDGEYRQLNDNILQIENEFYSPIRAKRVAKGSEKPSESLARAGVEYIEVRALDVNPYSAVGIEKSQIRFLDLFLLNCLLQPSAPSDATEEAEIAENLQAVVLEGRKPGLLLKRSGQELSLTHWLESLFGNLKQIAQLLDDEGQDDYQVALAKWHKAVENPNETLSGKIMAGLKDEQVDHSEWVMELAEQYHQQLKAYPLTENVDKRYQQDAVESLEKQAYLESQPSVSFDQFLVDYFKV.

Belongs to the glutamate--cysteine ligase type 1 family. Type 1 subfamily.

It catalyses the reaction L-cysteine + L-glutamate + ATP = gamma-L-glutamyl-L-cysteine + ADP + phosphate + H(+). It participates in sulfur metabolism; glutathione biosynthesis; glutathione from L-cysteine and L-glutamate: step 1/2. The sequence is that of Glutamate--cysteine ligase from Shewanella pealeana (strain ATCC 700345 / ANG-SQ1).